Consider the following 133-residue polypeptide: Hemoglobin subunit alpha-2 (133 aa).

The 133-residue stretch at 1–133 folds into the Globin domain; sequence NVKAVWEHVK…VKNVLTSRYR (133 aa). H50 serves as a coordination point for O2. Position 79 (H79) interacts with heme b.

The protein belongs to the globin family. Minor hemoglobin is a heterotetramer of two alpha-2 chains and two beta-2 chains. As to expression, red blood cells.

Functionally, involved in oxygen transport from the lung to the various peripheral tissues. This is Hemoglobin subunit alpha-2 from Pleurodeles waltl (Iberian ribbed newt).